The sequence spans 398 residues: Serpin-Z1C (398 aa).

The segment at 343 to 367 is RCL; sequence GTEAAASTAIKMALLQARPPSVMDF.

This sequence belongs to the serpin family.

Inhibits chymotrypsin and cathepsin G in vitro. The protein is Serpin-Z1C of Triticum aestivum (Wheat).